We begin with the raw amino-acid sequence, 638 residues long: Plasma kallikrein (638 aa).

Positions 1–19 are cleaved as a signal peptide; that stretch reads MILFNRVGYFVSLFATVSC. Apple domains follow at residues 21–104, 111–194, 201–284, and 292–375; these read CMTQ…LKQC, CHRD…LKSC, CPMD…LLTC, and CHSK…LRLC. 18 disulfide bridges follow: C21–C104, C47–C77, C51–C57, C111–C194, C137–C166, C141–C147, C201–C284, C227–C256, C231–C237, C292–C375, C318–C347, C322–C328, C340–C345, C383–C503, C419–C435, C517–C584, C548–C563, and C574–C602. An N-linked (GlcNAc...) asparagine glycan is attached at N127. N-linked (GlcNAc...) asparagine glycosylation occurs at N215. N308 carries N-linked (GlcNAc...) asparagine glycosylation. Residues 391-626 enclose the Peptidase S1 domain; it reads IVGGTNASLG…YMDWILEKTQ (236 aa). A glycan (N-linked (GlcNAc...) asparagine) is linked at N396. Catalysis depends on charge relay system residues H434 and D483. N-linked (GlcNAc...) asparagine glycosylation is present at N494. The active-site Charge relay system is the S578.

This sequence belongs to the peptidase S1 family. Plasma kallikrein subfamily. Forms a heterodimer with SERPINA5. The zymogen is activated by factor XIIa, which cleaves the molecule into a light chain, which contains the active site, and a heavy chain, which associates with HMW kininogen. These chains are linked by one or more disulfide bonds.

It localises to the secreted. It catalyses the reaction Cleaves selectively Arg-|-Xaa and Lys-|-Xaa bonds, including Lys-|-Arg and Arg-|-Ser bonds in (human) kininogen to release bradykinin.. Its activity is regulated as follows. Inhibited by SERPINA5. The enzyme cleaves Lys-Arg and Arg-Ser bonds. It activates, in a reciprocal reaction, factor XII after its binding to a negatively charged surface. It also releases bradykinin from HMW kininogen and may also play a role in the renin-angiotensin system by converting prorenin into renin. The sequence is that of Plasma kallikrein (Klkb1) from Mus musculus (Mouse).